The sequence spans 276 residues: NH(3)-dependent NAD(+) synthetase (276 aa).

Residue 43–50 coordinates ATP; the sequence is GISGGVDS. Asp49 contributes to the Mg(2+) binding site. Position 146 (Arg146) interacts with deamido-NAD(+). Thr166 is an ATP binding site. Position 171 (Glu171) interacts with Mg(2+). 2 residues coordinate deamido-NAD(+): Lys179 and Asp186. ATP-binding residues include Lys195 and Thr217. A deamido-NAD(+)-binding site is contributed by 266–267; sequence HK.

Belongs to the NAD synthetase family. As to quaternary structure, homodimer.

It catalyses the reaction deamido-NAD(+) + NH4(+) + ATP = AMP + diphosphate + NAD(+) + H(+). Its pathway is cofactor biosynthesis; NAD(+) biosynthesis; NAD(+) from deamido-NAD(+) (ammonia route): step 1/1. Its function is as follows. Catalyzes the ATP-dependent amidation of deamido-NAD to form NAD. Uses ammonia as a nitrogen source. In Vibrio parahaemolyticus serotype O3:K6 (strain RIMD 2210633), this protein is NH(3)-dependent NAD(+) synthetase.